The primary structure comprises 188 residues: dCTP deaminase (188 aa).

DCTP-binding positions include 111–116 (KSTYAR), 135–137 (TLE), Gln-156, Tyr-170, Lys-179, and Gln-180. Glu-137 (proton donor/acceptor) is an active-site residue.

It belongs to the dCTP deaminase family. Homotrimer.

The enzyme catalyses dCTP + H2O + H(+) = dUTP + NH4(+). The protein operates within pyrimidine metabolism; dUMP biosynthesis; dUMP from dCTP (dUTP route): step 1/2. Functionally, catalyzes the deamination of dCTP to dUTP. This Rickettsia africae (strain ESF-5) protein is dCTP deaminase.